The following is a 101-amino-acid chain: Interleukin-8 (101 aa).

Residues 1-22 form the signal peptide; sequence MPSQLRVAVLAAFLLSAVLCEG. 2 disulfide bridges follow: Cys34-Cys61 and Cys36-Cys77.

The protein belongs to the intercrine alpha (chemokine CxC) family. Homodimer. Interacts with TNFAIP6 (via Link domain); this interaction interferes with chemokine binding to glycosaminoglycans.

Its subcellular location is the secreted. Functionally, chemotactic factor that mediates inflammatory response by attracting neutrophils, basophils, and T-cells to clear pathogens and protect the host from infection. Also plays an important role in neutrophil activation. Released in response to an inflammatory stimulus, exerts its effect by binding to the G-protein-coupled receptors CXCR1 and CXCR2, primarily found in neutrophils, monocytes and endothelial cells. G-protein heterotrimer (alpha, beta, gamma subunits) constitutively binds to CXCR1/CXCR2 receptor and activation by IL8 leads to beta and gamma subunits release from Galpha (GNAI2 in neutrophils) and activation of several downstream signaling pathways including PI3K and MAPK pathways. The polypeptide is Interleukin-8 (CXCL8) (Cavia porcellus (Guinea pig)).